Reading from the N-terminus, the 329-residue chain is Sex comb on midleg-like protein 1 (329 aa).

S138 and S238 each carry phosphoserine. Positions 138–157 (SPTLPVSRRENNSPSNLPRP) are disordered. Residues 258-325 (WSVEAVVLFL…YYIDRLKQGK (68 aa)) form the SAM domain.

It belongs to the SCM family. As to expression, ubiquitous. Expressed in fetal and adult tissues.

Its subcellular location is the nucleus. In terms of biological role, putative Polycomb group (PcG) protein. PcG proteins act by forming multiprotein complexes, which are required to maintain the transcriptionally repressive state of homeotic genes throughout development. May be involved in spermatogenesis during sexual maturation. This is Sex comb on midleg-like protein 1 (SCML1) from Homo sapiens (Human).